The following is a 1077-amino-acid chain: Carbamoyl phosphate synthase large chain (1077 aa).

The interval 2 to 403 (PKRTDIKSIL…SLQKALRGLE (402 aa)) is carboxyphosphate synthetic domain. ATP is bound by residues R129, R169, G175, G176, E208, L210, E215, G241, I242, H243, Q285, and E299. An ATP-grasp 1 domain is found at 133–328 (DIAMKKIGLD…IAKIAAKLAV (196 aa)). 3 residues coordinate Mg(2+): Q285, E299, and N301. Residues Q285, E299, and N301 each coordinate Mn(2+). An oligomerization domain region spans residues 404–553 (VGATGFDPKV…YSTYEEECES (150 aa)). Residues 554-936 (NPTSDRPKVM…AFSKAMLGSQ (383 aa)) are carbamoyl phosphate synthetic domain. The 192-residue stretch at 679–870 (QQAVNRLGLK…LAKIAARVMV (192 aa)) folds into the ATP-grasp 2 domain. R715, R754, L756, E761, G786, V787, H788, S789, Q829, and E841 together coordinate ATP. Residues Q829, E841, and N843 each coordinate Mg(2+). Q829, E841, and N843 together coordinate Mn(2+). Positions 937–1077 (SGMKKSGRAL…MHAKIKNMKA (141 aa)) constitute an MGS-like domain. Residues 937 to 1077 (SGMKKSGRAL…MHAKIKNMKA (141 aa)) form an allosteric domain region.

This sequence belongs to the CarB family. As to quaternary structure, composed of two chains; the small (or glutamine) chain promotes the hydrolysis of glutamine to ammonia, which is used by the large (or ammonia) chain to synthesize carbamoyl phosphate. Tetramer of heterodimers (alpha,beta)4. Mg(2+) serves as cofactor. Mn(2+) is required as a cofactor.

The enzyme catalyses hydrogencarbonate + L-glutamine + 2 ATP + H2O = carbamoyl phosphate + L-glutamate + 2 ADP + phosphate + 2 H(+). It catalyses the reaction hydrogencarbonate + NH4(+) + 2 ATP = carbamoyl phosphate + 2 ADP + phosphate + 2 H(+). Its pathway is amino-acid biosynthesis; L-arginine biosynthesis; carbamoyl phosphate from bicarbonate: step 1/1. It participates in pyrimidine metabolism; UMP biosynthesis via de novo pathway; (S)-dihydroorotate from bicarbonate: step 1/3. In terms of biological role, large subunit of the glutamine-dependent carbamoyl phosphate synthetase (CPSase). CPSase catalyzes the formation of carbamoyl phosphate from the ammonia moiety of glutamine, carbonate, and phosphate donated by ATP, constituting the first step of 2 biosynthetic pathways, one leading to arginine and/or urea and the other to pyrimidine nucleotides. The large subunit (synthetase) binds the substrates ammonia (free or transferred from glutamine from the small subunit), hydrogencarbonate and ATP and carries out an ATP-coupled ligase reaction, activating hydrogencarbonate by forming carboxy phosphate which reacts with ammonia to form carbamoyl phosphate. This is Carbamoyl phosphate synthase large chain from Yersinia pestis.